Reading from the N-terminus, the 511-residue chain is Glucan endo-1,3-beta-glucosidase 1 (511 aa).

Positions methionine 1–serine 28 are cleaved as a signal peptide. Asparagine 109 is a glycosylation site (N-linked (GlcNAc...) asparagine). Glutamate 137 functions as the Proton donor in the catalytic mechanism. Asparagine 192 and asparagine 274 each carry an N-linked (GlcNAc...) asparagine glycan. Catalysis depends on glutamate 284, which acts as the Nucleophile. Residues asparagine 374, asparagine 378, asparagine 407, asparagine 473, and asparagine 480 are each glycosylated (N-linked (GlcNAc...) asparagine). An intrachain disulfide couples cysteine 382 to cysteine 445. Residue alanine 485 is the site of GPI-anchor amidated alanine attachment. Positions alanine 486–leucine 511 are cleaved as a propeptide — removed in mature form.

It belongs to the glycosyl hydrolase 17 family. Post-translationally, contains two additional disulfide bonds.

It is found in the cell membrane. The enzyme catalyses Hydrolysis of (1-&gt;3)-beta-D-glucosidic linkages in (1-&gt;3)-beta-D-glucans.. This chain is Glucan endo-1,3-beta-glucosidase 1, found in Arabidopsis thaliana (Mouse-ear cress).